Reading from the N-terminus, the 689-residue chain is Pentatricopeptide repeat-containing protein At2g03380, mitochondrial (689 aa).

The transit peptide at 1-12 (MLRSITLSPTRR) directs the protein to the mitochondrion. PPR repeat units lie at residues 75–105 (DISI…IPEP), 106–140 (DFYL…GFRY), 141–171 (DDIV…LVKV), 175–205 (DNVV…ITLR), 206–240 (NVVC…NVLG), 241–275 (NEYT…GIEL), 276–306 (SSCL…HSHV), 307–341 (DLVM…EIKP), 342–372 (NCVT…SIKV), 376–406 (DTNV…ESEK), 407–441 (DIVA…SVTP), 442–476 (NGVT…GFLA), 479–509 (SVHV…IEEK), 510–544 (NTIT…QQKP), 545–580 (NEST…NFTP), and 581–611 (STKH…MPIQ). Residues 616–689 (CFGAFLHGCG…SKIAGHSTME (74 aa)) are type E motif; degenerate.

It belongs to the PPR family. PCMP-E subfamily.

Its subcellular location is the mitochondrion. In Arabidopsis thaliana (Mouse-ear cress), this protein is Pentatricopeptide repeat-containing protein At2g03380, mitochondrial (PCMP-E47).